A 102-amino-acid polypeptide reads, in one-letter code: Protein PAPPAS (102 aa).

The next 2 membrane-spanning stretches (helical) occupy residues 13–33 and 82–102; these read LFLT…FVKW and IGSD…FFFF.

In terms of tissue distribution, expressed in placenta with lower expression in brain, kidney and testis.

It is found in the endoplasmic reticulum membrane. The protein is Protein PAPPAS (PAPPA-AS1) of Homo sapiens (Human).